Consider the following 258-residue polypeptide: Global transcriptional regulator CodY (258 aa).

A GAF domain region spans residues 1–156; the sequence is MSTLLSKTRR…SATIVGMELL (156 aa). Positions 204–223 form a DNA-binding region, H-T-H motif; that stretch reads ASKIADKVGITRSVIVNALR.

It belongs to the CodY family.

The protein localises to the cytoplasm. Functionally, DNA-binding global transcriptional regulator which is involved in the adaptive response to starvation and acts by directly or indirectly controlling the expression of numerous genes in response to nutrient availability. During rapid exponential growth, CodY is highly active and represses genes whose products allow adaptation to nutrient depletion. This is Global transcriptional regulator CodY from Clostridium perfringens (strain SM101 / Type A).